A 130-amino-acid chain; its full sequence is MSMQDPISDMLTRIRNGQAANKVAVKMPSSKLKVAIAALLKAEGYIADFAVEGEVKAELEITLKYFQAKPVIEQIKRVSRPGLRVYKKKDELPSVMGGLGVAVVSTSKGLMSDRAARKAGLGGEIICYVA.

It belongs to the universal ribosomal protein uS8 family. In terms of assembly, part of the 30S ribosomal subunit. Contacts proteins S5 and S12.

Functionally, one of the primary rRNA binding proteins, it binds directly to 16S rRNA central domain where it helps coordinate assembly of the platform of the 30S subunit. The polypeptide is Small ribosomal subunit protein uS8 (Vibrio cholerae serotype O1 (strain ATCC 39541 / Classical Ogawa 395 / O395)).